A 184-amino-acid chain; its full sequence is UPF0149 protein PputGB1_5261 (184 aa).

This sequence belongs to the UPF0149 family.

In Pseudomonas putida (strain GB-1), this protein is UPF0149 protein PputGB1_5261.